We begin with the raw amino-acid sequence, 181 residues long: Ion-translocating oxidoreductase complex subunit B (181 aa).

The tract at residues 1 to 26 (MLEAVSAVMSLGGMALFAGLGLGYAA) is hydrophobic. The 59-residue stretch at 32–90 (EADPVVEKLEALLPATNCGMCGHPGCGPYAQAITEGEAINLCTPGGKAVMESIAAMLGV) folds into the 4Fe-4S domain. [4Fe-4S] cluster-binding residues include C49, C52, C57, C73, C110, C113, C116, C120, C140, C143, C146, and C150. 2 4Fe-4S ferredoxin-type domains span residues 101–130 (KVAY…GANK) and 131–160 (QSHT…MQPV).

This sequence belongs to the 4Fe4S bacterial-type ferredoxin family. RnfB subfamily. The complex is composed of six subunits: RnfA, RnfB, RnfC, RnfD, RnfE and RnfG. [4Fe-4S] cluster serves as cofactor.

Its subcellular location is the cell inner membrane. Part of a membrane-bound complex that couples electron transfer with translocation of ions across the membrane. The sequence is that of Ion-translocating oxidoreductase complex subunit B from Magnetococcus marinus (strain ATCC BAA-1437 / JCM 17883 / MC-1).